Reading from the N-terminus, the 353-residue chain is Photosystem II D2 protein (353 aa).

Residue threonine 2 is modified to N-acetylthreonine. Threonine 2 is subject to Phosphothreonine. The helical transmembrane segment at 41–61 threads the bilayer; that stretch reads CAYFALGGWLTGTTFVTSWYT. Histidine 118 contributes to the chlorophyll a binding site. The helical transmembrane segment at 125 to 141 threads the bilayer; it reads GFMLRQFELARSVQLRP. 2 residues coordinate pheophytin a: glutamine 130 and asparagine 143. Residues 153-166 traverse the membrane as a helical segment; the sequence is VFVSVFLIYPLGQS. Histidine 198 is a chlorophyll a binding site. The helical transmembrane segment at 208–228 threads the bilayer; the sequence is AALLCAIHGATVENTLFEDGD. Residues histidine 215 and phenylalanine 262 each coordinate a plastoquinone. Histidine 215 is a Fe cation binding site. Histidine 269 provides a ligand contact to Fe cation. Residues 279–295 traverse the membrane as a helical segment; the sequence is GLWMSAIGVVGLALNLR.

Belongs to the reaction center PufL/M/PsbA/D family. PSII is composed of 1 copy each of membrane proteins PsbA, PsbB, PsbC, PsbD, PsbE, PsbF, PsbH, PsbI, PsbJ, PsbK, PsbL, PsbM, PsbT, PsbX, PsbY, PsbZ, Psb30/Ycf12, at least 3 peripheral proteins of the oxygen-evolving complex and a large number of cofactors. It forms dimeric complexes. The cofactor is The D1/D2 heterodimer binds P680, chlorophylls that are the primary electron donor of PSII, and subsequent electron acceptors. It shares a non-heme iron and each subunit binds pheophytin, quinone, additional chlorophylls, carotenoids and lipids. There is also a Cl(-1) ion associated with D1 and D2, which is required for oxygen evolution. The PSII complex binds additional chlorophylls, carotenoids and specific lipids..

It localises to the plastid. It is found in the chloroplast thylakoid membrane. The enzyme catalyses 2 a plastoquinone + 4 hnu + 2 H2O = 2 a plastoquinol + O2. Photosystem II (PSII) is a light-driven water:plastoquinone oxidoreductase that uses light energy to abstract electrons from H(2)O, generating O(2) and a proton gradient subsequently used for ATP formation. It consists of a core antenna complex that captures photons, and an electron transfer chain that converts photonic excitation into a charge separation. The D1/D2 (PsbA/PsbD) reaction center heterodimer binds P680, the primary electron donor of PSII as well as several subsequent electron acceptors. D2 is needed for assembly of a stable PSII complex. The chain is Photosystem II D2 protein from Zygnema circumcarinatum (Green alga).